A 75-amino-acid polypeptide reads, in one-letter code: Brevinin-2ISc (75 aa).

The N-terminal stretch at 1-22 is a signal peptide; the sequence is MFTLKKSLLLLFFLGTISLSLC. The propeptide at 23-40 is removed in mature form; that stretch reads EEERDADEDEGEMTEEEV. An intrachain disulfide couples C69 to C75.

In terms of tissue distribution, expressed by the skin glands.

It is found in the secreted. Has antimicrobial activity against Gram-negative bacterium E.coli ATCC 8739 (MIC=50 ug) and against Gram positive bacteria S.aureus ATCC 6538 (MIC=25 ug). Has no activity against methicillin-resistant S.aureus ATCC 43300, B.subtilis ATCC 6633 and against fungus C.albicans ATCC 90028. In Odorrana ishikawae (Ishikawa's frog), this protein is Brevinin-2ISc.